Here is a 696-residue protein sequence, read N- to C-terminus: Polyribonucleotide nucleotidyltransferase (696 aa).

Positions 483 and 489 each coordinate Mg(2+). Positions 550–609 (PRITTIWVKVDKIRDVIGSGGKNIRSVTEATGVSIDIDDTGKINIASTNKEACDLAIKMI) constitute a KH domain. Residues 619-687 (GKLYMGTVKK…KQGKIKLSRK (69 aa)) form the S1 motif domain.

The protein belongs to the polyribonucleotide nucleotidyltransferase family. It depends on Mg(2+) as a cofactor.

It localises to the cytoplasm. The enzyme catalyses RNA(n+1) + phosphate = RNA(n) + a ribonucleoside 5'-diphosphate. Involved in mRNA degradation. Catalyzes the phosphorolysis of single-stranded polyribonucleotides processively in the 3'- to 5'-direction. The sequence is that of Polyribonucleotide nucleotidyltransferase from Citrifermentans bemidjiense (strain ATCC BAA-1014 / DSM 16622 / JCM 12645 / Bem) (Geobacter bemidjiensis).